Reading from the N-terminus, the 381-residue chain is S-adenosylmethionine synthase (381 aa).

H15 lines the ATP pocket. Residue D17 coordinates Mg(2+). Position 43 (E43) interacts with K(+). The L-methionine site is built by E56 and Q99. Positions 99–109 (QSPDINQGVDR) are flexible loop. Residues 164–166 (DAK), 230–231 (RF), D239, 245–246 (RK), A262, and K266 contribute to the ATP site. D239 provides a ligand contact to L-methionine. L-methionine is bound at residue K270.

This sequence belongs to the AdoMet synthase family. As to quaternary structure, homotetramer; dimer of dimers. Requires Mg(2+) as cofactor. K(+) is required as a cofactor.

It is found in the cytoplasm. The enzyme catalyses L-methionine + ATP + H2O = S-adenosyl-L-methionine + phosphate + diphosphate. Its pathway is amino-acid biosynthesis; S-adenosyl-L-methionine biosynthesis; S-adenosyl-L-methionine from L-methionine: step 1/1. Its function is as follows. Catalyzes the formation of S-adenosylmethionine (AdoMet) from methionine and ATP. The overall synthetic reaction is composed of two sequential steps, AdoMet formation and the subsequent tripolyphosphate hydrolysis which occurs prior to release of AdoMet from the enzyme. The chain is S-adenosylmethionine synthase from Alteromonas mediterranea (strain DSM 17117 / CIP 110805 / LMG 28347 / Deep ecotype).